The sequence spans 526 residues: Nucleobase-ascorbate transporter 4 (526 aa).

12 helical membrane-spanning segments follow: residues 42 to 62, 69 to 89, 91 to 111, 131 to 151, 157 to 177, 186 to 206, 217 to 237, 282 to 302, 359 to 381, 388 to 410, 420 to 440, and 457 to 477; these read IVML…MGGG, VINT…LFGS, LPVV…ITFS, IQGA…FGLW, FLSP…LLAF, IEIG…LPHL, FAVL…TAAG, AFAM…SFIA, RVVQ…GAVL, IFAA…LLQF, FILG…TEYL, and VIMQ…AFLL.

It belongs to the nucleobase:cation symporter-2 (NCS2) (TC 2.A.40) family. In terms of tissue distribution, highly expressed in the root central cylinder. Expressed in the filaments and stigmatic papillae of pollinated flowers and developing siliques.

The protein localises to the membrane. The chain is Nucleobase-ascorbate transporter 4 (NAT4) from Arabidopsis thaliana (Mouse-ear cress).